An 887-amino-acid polypeptide reads, in one-letter code: Pyruvate, phosphate dikinase 2 (887 aa).

Residue Thr-467 is modified to Phosphothreonine; by PDRP1. His-469 (tele-phosphohistidine intermediate) is an active-site residue. The substrate site is built by Arg-575, Arg-632, Glu-761, Gly-782, Thr-783, Asn-784, and Asp-785. Glu-761 is a binding site for Mg(2+). Position 785 (Asp-785) interacts with Mg(2+). The Proton donor role is filled by Cys-847.

The protein belongs to the PEP-utilizing enzyme family. Requires Mg(2+) as cofactor.

It is found in the cytoplasm. It catalyses the reaction pyruvate + phosphate + ATP = phosphoenolpyruvate + AMP + diphosphate + H(+). In terms of biological role, formation of phosphoenolpyruvate. This Oryza sativa subsp. japonica (Rice) protein is Pyruvate, phosphate dikinase 2 (PPDK2).